A 208-amino-acid polypeptide reads, in one-letter code: Small ribosomal subunit protein uS4 (208 aa).

Residues 98-164 (SRLDNVVYRM…DRIKFALELA (67 aa)) form the S4 RNA-binding domain.

It belongs to the universal ribosomal protein uS4 family. In terms of assembly, part of the 30S ribosomal subunit. Contacts protein S5. The interaction surface between S4 and S5 is involved in control of translational fidelity.

In terms of biological role, one of the primary rRNA binding proteins, it binds directly to 16S rRNA where it nucleates assembly of the body of the 30S subunit. With S5 and S12 plays an important role in translational accuracy. The chain is Small ribosomal subunit protein uS4 from Nitrosococcus oceani (strain ATCC 19707 / BCRC 17464 / JCM 30415 / NCIMB 11848 / C-107).